Reading from the N-terminus, the 422-residue chain is Interferon-induced protein 44 (422 aa).

Residues Met1–Glu147 form the TLDc domain.

The protein belongs to the IFI44 family.

It is found in the cytoplasm. Its function is as follows. This protein aggregates to form microtubular structures. This is Interferon-induced protein 44 (Ifi44) from Mus musculus (Mouse).